Here is a 156-residue protein sequence, read N- to C-terminus: Ribosomal RNA large subunit methyltransferase H (156 aa).

S-adenosyl-L-methionine is bound by residues L73, G104, and 123-128; that span reads LSALTL.

Belongs to the RNA methyltransferase RlmH family. Homodimer.

It localises to the cytoplasm. It catalyses the reaction pseudouridine(1915) in 23S rRNA + S-adenosyl-L-methionine = N(3)-methylpseudouridine(1915) in 23S rRNA + S-adenosyl-L-homocysteine + H(+). Functionally, specifically methylates the pseudouridine at position 1915 (m3Psi1915) in 23S rRNA. This chain is Ribosomal RNA large subunit methyltransferase H, found in Shewanella pealeana (strain ATCC 700345 / ANG-SQ1).